Here is a 393-residue protein sequence, read N- to C-terminus: MSDSTPKTPRGFVVHTAPVGLADDGRDDFTVLASTAPATVSAVFTRSRFAGPSVVLCREAVADGQARGVVVLARNANVATGLEGEENAREVREAVARALGLPEGEMLIASTGVIGRQYPMESIREHLKTLEWPAGEGGFDRAARAIMTTDTRPKEVRVSVGGATLVGIAKGVGMLEPDMATLLTFFATDARLDPAEQDRLFRRVMDRTFNAVSIDTDTSTSDTAVLFANGLAGEVDAGEFEEALHTAALALVKDIASDGEGAAKLIEVQVTGARDDAQAKRVGKTVVNSPLVKTAVHGCDPNWGRVAMAIGKCSDDTDIDQERVTIRFGEVEVYPPKARGDQADDALRAAVAEHLRGDEVVIGIDLAIADGAFTVYGCDLTEGYVRLNSEYTT.

The substrate site is built by Thr148, Lys170, Thr181, Glu260, Asn388, and Thr393. Thr181 (nucleophile) is an active-site residue.

It belongs to the ArgJ family. In terms of assembly, heterotetramer of two alpha and two beta chains.

It localises to the cytoplasm. The enzyme catalyses N(2)-acetyl-L-ornithine + L-glutamate = N-acetyl-L-glutamate + L-ornithine. The catalysed reaction is L-glutamate + acetyl-CoA = N-acetyl-L-glutamate + CoA + H(+). It functions in the pathway amino-acid biosynthesis; L-arginine biosynthesis; L-ornithine and N-acetyl-L-glutamate from L-glutamate and N(2)-acetyl-L-ornithine (cyclic): step 1/1. Its pathway is amino-acid biosynthesis; L-arginine biosynthesis; N(2)-acetyl-L-ornithine from L-glutamate: step 1/4. Catalyzes two activities which are involved in the cyclic version of arginine biosynthesis: the synthesis of N-acetylglutamate from glutamate and acetyl-CoA as the acetyl donor, and of ornithine by transacetylation between N(2)-acetylornithine and glutamate. In Streptomyces clavuligerus, this protein is Arginine biosynthesis bifunctional protein ArgJ 3.